The primary structure comprises 263 residues: Phosphatidylglycerol--prolipoprotein diacylglyceryl transferase (263 aa).

The next 4 membrane-spanning stretches (helical) occupy residues V10–F30, M56–Y76, I91–L111, and G117–F137. Position 139 (R139) interacts with a 1,2-diacyl-sn-glycero-3-phospho-(1'-sn-glycerol). Transmembrane regions (helical) follow at residues P171–F191, G199–V219, and F231–L251.

Belongs to the Lgt family.

The protein localises to the cell inner membrane. It catalyses the reaction L-cysteinyl-[prolipoprotein] + a 1,2-diacyl-sn-glycero-3-phospho-(1'-sn-glycerol) = an S-1,2-diacyl-sn-glyceryl-L-cysteinyl-[prolipoprotein] + sn-glycerol 1-phosphate + H(+). It participates in protein modification; lipoprotein biosynthesis (diacylglyceryl transfer). Its function is as follows. Catalyzes the transfer of the diacylglyceryl group from phosphatidylglycerol to the sulfhydryl group of the N-terminal cysteine of a prolipoprotein, the first step in the formation of mature lipoproteins. This is Phosphatidylglycerol--prolipoprotein diacylglyceryl transferase from Nitratidesulfovibrio vulgaris (strain ATCC 29579 / DSM 644 / CCUG 34227 / NCIMB 8303 / VKM B-1760 / Hildenborough) (Desulfovibrio vulgaris).